The sequence spans 123 residues: uncharacterized protein (123 aa).

The signal sequence occupies residues 1–24 (MLPLCLTFLSFFLSLGGSFKAVMT). Helical transmembrane passes span 39–59 (FWIF…ALAI) and 101–121 (FGGI…ALTG).

The protein localises to the membrane. This is an uncharacterized protein from Saccharomyces cerevisiae (strain ATCC 204508 / S288c) (Baker's yeast).